We begin with the raw amino-acid sequence, 177 residues long: UPF0200 protein STK_09500 (177 aa).

11–18 contributes to the ATP binding site; sequence GMPGSGKG.

The protein belongs to the UPF0200 family.

The chain is UPF0200 protein STK_09500 from Sulfurisphaera tokodaii (strain DSM 16993 / JCM 10545 / NBRC 100140 / 7) (Sulfolobus tokodaii).